Here is a 356-residue protein sequence, read N- to C-terminus: Nuclear hormone receptor family member nhr-42 (356 aa).

Positions 7 to 82 form a DNA-binding region, nuclear receptor; it reads SQTCLICGDS…VGMRESAVLS (76 aa). Residues 10 to 30 form an NR C4-type zinc finger; that stretch reads CLICGDSADSLHFGALSCRAC. The NR C4-type; atypical zinc finger occupies 48–70; the sequence is CDRQCKVDTGMRKLCASCRYDKC. One can recognise an NR LBD domain in the interval 108–356; the sequence is TSDSVLENLQ…HSSIFGNMAE (249 aa).

It belongs to the nuclear hormone receptor family.

Its subcellular location is the nucleus. Functionally, orphan nuclear receptor. The chain is Nuclear hormone receptor family member nhr-42 (nhr-42) from Caenorhabditis elegans.